The primary structure comprises 399 residues: Acetate kinase (399 aa).

Residue asparagine 8 participates in Mg(2+) binding. ATP is bound at residue lysine 15. Arginine 89 is a binding site for substrate. Residue aspartate 146 is the Proton donor/acceptor of the active site. ATP contacts are provided by residues 206 to 210, 283 to 285, and 331 to 335; these read HVGNG, DMR, and GMGEN. Mg(2+) is bound at residue glutamate 383.

The protein belongs to the acetokinase family. As to quaternary structure, homodimer. Requires Mg(2+) as cofactor. It depends on Mn(2+) as a cofactor.

Its subcellular location is the cytoplasm. It catalyses the reaction acetate + ATP = acetyl phosphate + ADP. Its pathway is metabolic intermediate biosynthesis; acetyl-CoA biosynthesis; acetyl-CoA from acetate: step 1/2. Its function is as follows. Catalyzes the formation of acetyl phosphate from acetate and ATP. Can also catalyze the reverse reaction. The chain is Acetate kinase from Streptococcus equi subsp. equi (strain 4047).